Consider the following 139-residue polypeptide: Centromere protein S (139 aa).

The interval 99 to 139 (ELASSNMEQKEKKKKKSSAAKGRKTEENETPVTESEDSNMA) is disordered. Residues 110–120 (KKKKKSSAAKG) are compositionally biased toward basic residues.

The protein belongs to the TAF9 family. CENP-S/MHF1 subfamily. As to quaternary structure, heterodimer with CENPX, sometimes called MHF; this interaction stabilizes both partners. MHF heterodimers can assemble to form tetrameric structures. MHF also coassemble with CENPT-CENPW heterodimers at centromeres to form the tetrameric CENP-T-W-S-X complex. Forms a discrete complex with FANCM and CENPX, called FANCM-MHF; this interaction, probably mediated by direct binding between CENPS and FANCM, leads to synergistic activation of double-stranded DNA binding and strongly stimulates FANCM-mediated DNA remodeling. Recruited by FANCM to the Fanconi anemia (FA) core complex, which consists of CENPS, CENPX, FANCA, FANCB, FANCC, FANCE, FANCF, FANCG, FANCL, FANCM, FAAP24 and FAAP100. The FA core complex associates with Bloom syndrome (BLM) complex, which consists of at least BLM, DNA topoisomerase 3-alpha (TOP3A), RMI1/BLAP75, RPA1/RPA70 and RPA2/RPA32. The super complex between FA and BLM is called BRAFT. Component of the CENPA-CAD complex, composed of CENPI, CENPK, CENPL, CENPO, CENPP, CENPQ, CENPR and CENPS. The CENPA-CAD complex is probably recruited on centromeres by the CENPA-NAC complex, at least composed of CENPA, CENPC, CENPH, CENPM, CENPN, CENPT and CENPU.

It localises to the nucleus. The protein resides in the chromosome. Its subcellular location is the centromere. It is found in the kinetochore. DNA-binding component of the Fanconi anemia (FA) core complex. Required for the normal activation of the FA pathway, leading to monoubiquitination of the FANCI-FANCD2 complex in response to DNA damage, cellular resistance to DNA cross-linking drugs, and prevention of chromosomal breakage. In complex with CENPX (MHF heterodimer), crucial cofactor for FANCM in both binding and ATP-dependent remodeling of DNA. Stabilizes FANCM. In complex with CENPX and FANCM (but not other FANC proteins), rapidly recruited to blocked forks and promotes gene conversion at blocked replication forks. In complex with CENPT, CENPW and CENPX (CENP-T-W-S-X heterotetramer), involved in the formation of a functional kinetochore outer plate, which is essential for kinetochore-microtubule attachment and faithful mitotic progression. As a component of MHF and CENP-T-W-S-X complexes, binds DNA and bends it to form a nucleosome-like structure. DNA-binding function is fulfilled in the presence of CENPX, with the following preference for DNA substates: Holliday junction &gt; double-stranded &gt; splay arm &gt; single-stranded. Does not bind DNA on its own. In Gallus gallus (Chicken), this protein is Centromere protein S (CENPS).